The sequence spans 278 residues: NAD-capped RNA hydrolase NudC (278 aa).

Residue arginine 84 participates in substrate binding. Residues cysteine 114 and cysteine 117 each coordinate Zn(2+). Glutamate 127 is a substrate binding site. The Zn(2+) site is built by cysteine 132 and cysteine 135. Tyrosine 140 is a substrate binding site. A Nudix hydrolase domain is found at 141-265 (PRLSPSMIVL…IARHLIDLYL (125 aa)). Residues alanine 174, glutamate 190, and glutamate 194 each coordinate a divalent metal cation. A Nudix box motif is present at residues 175–196 (GFVEAGESVEQCVVREVREEVG). 208–215 (QNWPFPHS) contributes to the substrate binding site. Glutamate 235 contributes to the a divalent metal cation binding site. Alanine 257 contributes to the substrate binding site.

It belongs to the Nudix hydrolase family. NudC subfamily. As to quaternary structure, homodimer. Mg(2+) is required as a cofactor. The cofactor is Mn(2+). It depends on Zn(2+) as a cofactor.

It carries out the reaction a 5'-end NAD(+)-phospho-ribonucleoside in mRNA + H2O = a 5'-end phospho-adenosine-phospho-ribonucleoside in mRNA + beta-nicotinamide D-ribonucleotide + 2 H(+). It catalyses the reaction NAD(+) + H2O = beta-nicotinamide D-ribonucleotide + AMP + 2 H(+). The catalysed reaction is NADH + H2O = reduced beta-nicotinamide D-ribonucleotide + AMP + 2 H(+). In terms of biological role, mRNA decapping enzyme that specifically removes the nicotinamide adenine dinucleotide (NAD) cap from a subset of mRNAs by hydrolyzing the diphosphate linkage to produce nicotinamide mononucleotide (NMN) and 5' monophosphate mRNA. The NAD-cap is present at the 5'-end of some mRNAs and stabilizes RNA against 5'-processing. Has preference for mRNAs with a 5'-end purine. Catalyzes the hydrolysis of a broad range of dinucleotide pyrophosphates. The protein is NAD-capped RNA hydrolase NudC of Pseudomonas aeruginosa (strain ATCC 15692 / DSM 22644 / CIP 104116 / JCM 14847 / LMG 12228 / 1C / PRS 101 / PAO1).